The sequence spans 832 residues: Translation initiation factor IF-2 (832 aa).

Residues 1–10 (MLMSDVEKFG) show a composition bias toward basic and acidic residues. Disordered stretches follow at residues 1-87 (MLMS…SRSA), 120-148 (RDEEEVEVAPPEGESVIDEPDSVKEPAAA), and 163-201 (IAPGAAGTRPGRGGHDDKGKRYSYQGAGGKIKEKEGGGG). Residues 11-20 (GDCGSSGGSG) show a composition bias toward gly residues. Composition is skewed to polar residues over residues 29–42 (RASTLAKTPTSTGG) and 71–87 (SPYTSDDNRQGQISRSA). The tr-type G domain maps to 331–500 (PRPPVVTVMG…LLLAEMLELR (170 aa)). The segment at 340–347 (GHVDHGKT) is G1. Residue 340-347 (GHVDHGKT) coordinates GTP. The segment at 365-369 (GITQH) is G2. Residues 386–389 (DTPG) are G3. GTP contacts are provided by residues 386–390 (DTPGH) and 440–443 (NKID). The tract at residues 440–443 (NKID) is G4. The tract at residues 476–478 (SAK) is G5.

The protein belongs to the TRAFAC class translation factor GTPase superfamily. Classic translation factor GTPase family. IF-2 subfamily.

Its subcellular location is the cytoplasm. One of the essential components for the initiation of protein synthesis. Protects formylmethionyl-tRNA from spontaneous hydrolysis and promotes its binding to the 30S ribosomal subunits. Also involved in the hydrolysis of GTP during the formation of the 70S ribosomal complex. The protein is Translation initiation factor IF-2 of Anaplasma marginale (strain St. Maries).